The following is a 447-amino-acid chain: Tubulin beta chain (447 aa).

GTP contacts are provided by Gln11, Glu69, Ser138, Gly142, Thr143, Gly144, Asn204, and Asn226. Glu69 provides a ligand contact to Mg(2+). The segment at 425–447 is disordered; it reads YQEASISEGEEEYDEEAPLEAEE. Positions 432–447 are enriched in acidic residues; it reads EGEEEYDEEAPLEAEE.

It belongs to the tubulin family. As to quaternary structure, dimer of alpha and beta chains. A typical microtubule is a hollow water-filled tube with an outer diameter of 25 nm and an inner diameter of 15 nM. Alpha-beta heterodimers associate head-to-tail to form protofilaments running lengthwise along the microtubule wall with the beta-tubulin subunit facing the microtubule plus end conferring a structural polarity. Microtubules usually have 13 protofilaments but different protofilament numbers can be found in some organisms and specialized cells. The cofactor is Mg(2+).

The protein resides in the cytoplasm. It localises to the cytoskeleton. Tubulin is the major constituent of microtubules, a cylinder consisting of laterally associated linear protofilaments composed of alpha- and beta-tubulin heterodimers. Microtubules grow by the addition of GTP-tubulin dimers to the microtubule end, where a stabilizing cap forms. Below the cap, tubulin dimers are in GDP-bound state, owing to GTPase activity of alpha-tubulin. This is Tubulin beta chain (tubB) from Phaeosphaeria nodorum (strain SN15 / ATCC MYA-4574 / FGSC 10173) (Glume blotch fungus).